The sequence spans 756 residues: 5-methyltetrahydropteroyltriglutamate--homocysteine methyltransferase (756 aa).

Residues 16–19 (RELK) and K112 contribute to the 5-methyltetrahydropteroyltri-L-glutamate site. Residues 432-434 (IGS) and E485 contribute to the L-homocysteine site. L-methionine-binding positions include 432–434 (IGS) and E485. 5-methyltetrahydropteroyltri-L-glutamate is bound by residues 516 to 517 (RC) and W562. D600 provides a ligand contact to L-homocysteine. Residue D600 participates in L-methionine binding. Residue E606 participates in 5-methyltetrahydropteroyltri-L-glutamate binding. The Zn(2+) site is built by H642, C644, and E666. The Proton donor role is filled by H695. Zn(2+) is bound at residue C727.

This sequence belongs to the vitamin-B12 independent methionine synthase family. Zn(2+) is required as a cofactor.

It carries out the reaction 5-methyltetrahydropteroyltri-L-glutamate + L-homocysteine = tetrahydropteroyltri-L-glutamate + L-methionine. The protein operates within amino-acid biosynthesis; L-methionine biosynthesis via de novo pathway; L-methionine from L-homocysteine (MetE route): step 1/1. Its function is as follows. Catalyzes the transfer of a methyl group from 5-methyltetrahydrofolate to homocysteine resulting in methionine formation. The sequence is that of 5-methyltetrahydropteroyltriglutamate--homocysteine methyltransferase from Haemophilus influenzae (strain PittGG).